Reading from the N-terminus, the 224-residue chain is Cytidylate kinase (224 aa).

An ATP-binding site is contributed by 12–20 (GPSGAGKGT).

Belongs to the cytidylate kinase family. Type 1 subfamily.

It is found in the cytoplasm. The enzyme catalyses CMP + ATP = CDP + ADP. It carries out the reaction dCMP + ATP = dCDP + ADP. The protein is Cytidylate kinase of Aliivibrio salmonicida (strain LFI1238) (Vibrio salmonicida (strain LFI1238)).